We begin with the raw amino-acid sequence, 89 residues long: MFGLGGQPQLSSQQKLSAAEAELDLVTDMFNKLVDNCHKKCIEQIYNDGQLNKNESTCIDRCVAKYFETNVKVGENMQQLGQAFSPGKF.

The Twin CX3C motif signature appears at 37-62 (CHKKCIEQIYNDGQLNKNESTCIDRC). Disulfide bonds link C37/C62 and C41/C58.

Belongs to the small Tim family. Heterohexamer; composed of 3 copies of TIM9 and 3 copies of TIM10, named soluble 70 kDa complex. Associates directly with the TIM22 complex, whose core is composed of TIM22 and TIM54. Interacts with the transmembrane regions of multi-pass transmembrane proteins in transit.

Its subcellular location is the mitochondrion inner membrane. Mitochondrial intermembrane chaperone that participates in the import and insertion of multi-pass transmembrane proteins into the mitochondrial inner membrane. Also required for the transfer of beta-barrel precursors from the TOM complex to the sorting and assembly machinery (SAM complex) of the outer membrane. Acts as a chaperone-like protein that protects the hydrophobic precursors from aggregation and guide them through the mitochondrial intermembrane space. This chain is Mitochondrial import inner membrane translocase subunit TIM10 (TIM10), found in Kluyveromyces lactis (strain ATCC 8585 / CBS 2359 / DSM 70799 / NBRC 1267 / NRRL Y-1140 / WM37) (Yeast).